The sequence spans 646 residues: Replication protein E1 (646 aa).

Positions 86–88 match the Nuclear localization signal motif; sequence KRK. Ser91, Ser95, and Ser109 each carry phosphoserine; by host. The short motif at 108–117 is the Nuclear export signal element; that stretch reads LSPRLHAIKL. The tract at residues 138–166 is disordered; the sequence is YGYSQVETTETQVEEEHGEPEGIEGGSGR. The segment covering 149–159 has biased composition (acidic residues); that stretch reads QVEEEHGEPEG. The DNA-binding region stretch occupies residues 186-352; that stretch reads QQLSPRTQVV…QTMLEHSFAE (167 aa). One can recognise an SF3 helicase domain in the interval 450-600; it reads IDIIVFLAAL…FPFDSNGNAV (151 aa). Position 476–483 (476–483) interacts with ATP; it reads GPPDTGKS. Lys557 is covalently cross-linked (Glycyl lysine isopeptide (Lys-Gly) (interchain with G-Cter in SUMO)).

It belongs to the papillomaviridae E1 protein family. As to quaternary structure, can form hexamers. Interacts with E2 protein; this interaction increases E1 DNA binding specificity. Interacts with host DNA polymerase subunit POLA2. Interacts with host single stranded DNA-binding protein RPA1. Interacts with host TOP1; this interaction stimulates the enzymatic activity of TOP1. Post-translationally, phosphorylated. Sumoylated.

It is found in the host nucleus. It catalyses the reaction Couples ATP hydrolysis with the unwinding of duplex DNA by translocating in the 3'-5' direction.. The catalysed reaction is ATP + H2O = ADP + phosphate + H(+). Its function is as follows. ATP-dependent DNA 3'-5' helicase required for initiation of viral DNA replication. It forms a complex with the viral E2 protein. The E1-E2 complex binds to the replication origin which contains binding sites for both proteins. During the initial step, a dimer of E1 interacts with a dimer of protein E2 leading to a complex that binds the viral origin of replication with high specificity. Then, a second dimer of E1 displaces the E2 dimer in an ATP-dependent manner to form the E1 tetramer. Following this, two E1 monomers are added to each half of the site, which results in the formation of two E1 trimers on the viral ori. Subsequently, two hexamers will be created. The double hexamer acts as a bi-directional helicase machinery and unwinds the viral DNA and then recruits the host DNA polymerase to start replication. The chain is Replication protein E1 from Homo sapiens (Human).